Here is a 328-residue protein sequence, read N- to C-terminus: Malate dehydrogenase (328 aa).

11-17 (GAAGQIG) contributes to the NAD(+) binding site. Substrate is bound by residues arginine 94 and arginine 100. NAD(+)-binding positions include asparagine 107, glutamine 114, and 131 to 133 (VGN). Positions 133 and 164 each coordinate substrate. The active-site Proton acceptor is histidine 189.

This sequence belongs to the LDH/MDH superfamily. MDH type 2 family.

It catalyses the reaction (S)-malate + NAD(+) = oxaloacetate + NADH + H(+). Its function is as follows. Catalyzes the reversible oxidation of malate to oxaloacetate. This Stenotrophomonas maltophilia (strain K279a) protein is Malate dehydrogenase.